Reading from the N-terminus, the 532-residue chain is Cytochrome P450 12b1, mitochondrial (532 aa).

Cysteine 480 lines the heme pocket.

Belongs to the cytochrome P450 family. It depends on heme as a cofactor.

It localises to the mitochondrion. Functionally, probably involved in steroid hormones biosynthesis. In Drosophila acanthoptera (Fruit fly), this protein is Cytochrome P450 12b1, mitochondrial (Cyp12b1).